The following is a 116-amino-acid chain: Beta-D-galactosidase Rv1717 (116 aa).

One can recognise a Cupin type-2 domain in the interval 40–107; it reads LSVYRPGGTA…TDRQALLLVT (68 aa).

The protein localises to the secreted. It localises to the cell wall. The catalysed reaction is Hydrolysis of terminal non-reducing beta-D-galactose residues in beta-D-galactosides.. With respect to regulation, beta-galactosidase activity is activated by Mg(2+) and significantly inhibited by Ca(2+), Cd(2+), Fe(2+), Ni(2+), Cu(2+) and Zn(2+). Inhibited by EDTA. Beta-D-galactopyranosidase that specifically recognizes the beta-glycosidic bonds formed with beta-D-galactopyranose (beta-D-Gal) or N-acetylgalactosamine (beta-D-GalNAc). May target the galactoside linkages in the exopolysaccharide component of the mycobacterial extracellular polymeric substance (EPS) and help dispersal of Mtb bacteria from a deteriorating biofilm. This chain is Beta-D-galactosidase Rv1717, found in Mycobacterium tuberculosis (strain ATCC 25618 / H37Rv).